A 416-amino-acid chain; its full sequence is uncharacterized protein (416 aa).

Zn(2+)-binding residues include His-29, Asp-31, Glu-144, His-215, and His-236.

Belongs to the metallo-dependent hydrolases superfamily. Peptidase M19 family. Requires Zn(2+) as cofactor.

It catalyses the reaction an L-aminoacyl-L-amino acid + H2O = 2 an L-alpha-amino acid. This is an uncharacterized protein from Schizosaccharomyces pombe (strain 972 / ATCC 24843) (Fission yeast).